The sequence spans 157 residues: Nucleoside deoxyribosyltransferase (157 aa).

The Nucleophile role is filled by E98.

This sequence belongs to the nucleoside deoxyribosyltransferase family. In terms of assembly, homohexamer.

It carries out the reaction 2-deoxy-D-ribosyl-base(1) + base(2) = 2-deoxy-D-ribosyl-base(2) + base(1).. The protein operates within nucleotide metabolism; nucleotide salvage pathway. Functionally, catalyzes the cleavage of the glycosidic bond of 2'-deoxyribonucleosides and the transfer of the deoxyribosyl moiety to an acceptor purine or pyrimidine base. In Lactobacillus leichmannii, this protein is Nucleoside deoxyribosyltransferase (ntd).